We begin with the raw amino-acid sequence, 374 residues long: Peptide chain release factor 2 (374 aa).

An N5-methylglutamine modification is found at Q252.

It belongs to the prokaryotic/mitochondrial release factor family. Methylated by PrmC. Methylation increases the termination efficiency of RF2.

The protein localises to the cytoplasm. Functionally, peptide chain release factor 2 directs the termination of translation in response to the peptide chain termination codons UGA and UAA. The protein is Peptide chain release factor 2 of Xanthomonas euvesicatoria pv. vesicatoria (strain 85-10) (Xanthomonas campestris pv. vesicatoria).